The chain runs to 361 residues: Cell cycle control protein 50A (361 aa).

Positions Met1–Pro28 are disordered. Residue Ala2 is modified to N-acetylalanine. Residues Ala2 to Gly48 are required for ATPase and aminophospholipid flippase activity. Topologically, residues Ala2–Thr49 are cytoplasmic. An interaction with ATP8A2 region spans residues Thr49–His348. Residues Val50–Val70 form a helical membrane-spanning segment. The Exoplasmic loop portion of the chain corresponds to Thr71–Leu325. Cystine bridges form between Cys91–Cys104, Cys94–Cys102, and Cys157–Cys171. N-linked (GlcNAc...) asparagine glycans are attached at residues Asn180, Asn190, and Asn294. Residues Gly326–Ile346 traverse the membrane as a helical segment. At Asn347–Ile361 the chain is on the cytoplasmic side.

This sequence belongs to the CDC50/LEM3 family. In terms of assembly, component of various P4-ATPase flippase complexes which consists of a catalytic alpha subunit and an accessory beta subunit. Interacts with ATP8A1 to form a flippase complex; this complex forms an intermediate phosphoenzyme. Interacts with ATP8A2 to form a flippase complex. ATP8B1:TMEM30A and ATP8B2:TMEM30A flippase complexes have been shown to form intermediate phosphoenzymes in vitro. Interacts with alpha subunits ATP8A1, ATP8B1, ATP8B2, ATP8B4, ATP10A, ATP10B, ATP10D, ATP11A, ATP11B and ATP11C. N-glycosylated; contributes to ATP8A2:TMEM30A flippase complex assembly but not to functional activity. As to expression, expressed in photoreceptor cells; detected in retina outer segment and other retinal layers (at protein level).

It localises to the membrane. It is found in the golgi apparatus. The protein resides in the cytoplasmic vesicle. The protein localises to the secretory vesicle membrane. Its subcellular location is the apical cell membrane. It localises to the photoreceptor inner segment. It is found in the cell projection. The protein resides in the cilium. The protein localises to the photoreceptor outer segment. Its function is as follows. Accessory component of a P4-ATPase flippase complex which catalyzes the hydrolysis of ATP coupled to the transport of aminophospholipids from the outer to the inner leaflet of various membranes and ensures the maintenance of asymmetric distribution of phospholipids. Phospholipid translocation also seems to be implicated in vesicle formation and in uptake of lipid signaling molecules. The beta subunit may assist in binding of the phospholipid substrate. Required for the proper folding, assembly and ER to Golgi exit of the ATP8A2:TMEM30A flippase complex. ATP8A2:TMEM30A may be involved in regulation of neurite outgrowth, and, reconstituted to liposomes, predomiminantly transports phosphatidylserine (PS) and to a lesser extent phosphatidylethanolamine (PE). The ATP8A1:TMEM30A flippase complex seems to play a role in regulation of cell migration probably involving flippase-mediated translocation of phosphatidylethanolamine (PE) at the plasma membrane. Required for the formation of the ATP8A2, ATP8B1 and ATP8B2 P-type ATPAse intermediate phosphoenzymes. Involved in uptake of platelet-activating factor (PAF). Can also mediate the export of alpha subunits ATP8A1, ATP8B1, ATP8B2, ATP8B4, ATP10A, ATP10B, ATP10D, ATP11A, ATP11B and ATP11C from the ER to other membrane localizations. This chain is Cell cycle control protein 50A, found in Bos taurus (Bovine).